We begin with the raw amino-acid sequence, 237 residues long: Phosphoribosylaminoimidazole-succinocarboxamide synthase (237 aa).

Belongs to the SAICAR synthetase family.

It carries out the reaction 5-amino-1-(5-phospho-D-ribosyl)imidazole-4-carboxylate + L-aspartate + ATP = (2S)-2-[5-amino-1-(5-phospho-beta-D-ribosyl)imidazole-4-carboxamido]succinate + ADP + phosphate + 2 H(+). The protein operates within purine metabolism; IMP biosynthesis via de novo pathway; 5-amino-1-(5-phospho-D-ribosyl)imidazole-4-carboxamide from 5-amino-1-(5-phospho-D-ribosyl)imidazole-4-carboxylate: step 1/2. This is Phosphoribosylaminoimidazole-succinocarboxamide synthase from Marinobacter nauticus (strain ATCC 700491 / DSM 11845 / VT8) (Marinobacter aquaeolei).